The following is a 1567-amino-acid chain: ABC multidrug transporter MDR1 (1567 aa).

A compositionally biased stretch (pro residues) spans 1-11 (MASQPPQPPSG). Residues 1–37 (MASQPPQPPSGQPDTQYEEYQSEVITETTNRPTPAAD) form a disordered region. Residues 22–32 (SEVITETTNRP) are compositionally biased toward polar residues. N149, N157, and N356 each carry an N-linked (GlcNAc...) asparagine glycan. The 266-residue stretch at 167–432 (VQYQDTFLSP…FEEMGWYCPP (266 aa)) folds into the ABC transporter 1 domain. The next 6 helical transmembrane spans lie at 543–563 (STIA…SLFF), 571–591 (GFFA…LMSI), 636–656 (IPIK…LGGL), 661–681 (AKFF…SAIF), 691–711 (IPQA…YTGF), and 798–818 (LGIL…VSEL). 3 N-linked (GlcNAc...) asparagine glycosylation sites follow: N819, N895, and N912. Residues 891-1134 (FTWRNVTYDI…LLNYFETHGA (244 aa)) form the ABC transporter 2 domain. Residue 927–934 (GVSGAGKT) participates in ATP binding. Positions 1172-1202 (ESRHVQQELDRIQSETSKRNEGHGQSAEKEP) are disordered. The chain crosses the membrane as a helical span at residues 1231 to 1251 (IWGKLLLGLTSALFIGFSFFL). N-linked (GlcNAc...) asparagine glycosylation is present at N1253. The next 5 membrane-spanning stretches (helical) occupy residues 1257–1277 (AGLQ…SSLV), 1305–1325 (VFLL…GIIA), 1345–1365 (ILLL…QMII), 1372–1392 (ETAG…NGVL), and 1498–1518 (GIGW…YYLI).

The protein belongs to the ABC transporter superfamily. ABCG family. PDR (TC 3.A.1.205) subfamily.

It localises to the cell membrane. It carries out the reaction voriconazole(in) + ATP + H2O = voriconazole(out) + ADP + phosphate + H(+). The catalysed reaction is fluconazole(in) + ATP + H2O = fluconazole(out) + ADP + phosphate + H(+). The enzyme catalyses (R)-miconazole(in) + ATP + H2O = (R)-miconazole(out) + ADP + phosphate + H(+). It catalyses the reaction (S)-miconazole(in) + ATP + H2O = (S)-miconazole(out) + ADP + phosphate + H(+). Functionally, pleiotropic ABC efflux transporter that may be involved in the modulation susceptibility to a wide range of unrelated cytotoxic compounds. The chain is ABC multidrug transporter MDR1 from Trichophyton equinum (strain ATCC MYA-4606 / CBS 127.97) (Horse ringworm fungus).